We begin with the raw amino-acid sequence, 286 residues long: 5-amino-6-(5-phospho-D-ribitylamino)uracil phosphatase YwtE (286 aa).

Asp-7 functions as the Nucleophile in the catalytic mechanism. Asp-7 contacts Mg(2+). Residue Leu-8 participates in phosphate binding. Asp-9 lines the Mg(2+) pocket. Phosphate is bound by residues 41-42 and Lys-210; that span reads TG. Mg(2+) contacts are provided by Asp-233 and Ser-234. Phosphate is bound at residue Asn-236.

The protein belongs to the HAD-like hydrolase superfamily. Cof family. It depends on Mg(2+) as a cofactor.

The enzyme catalyses 5-amino-6-(5-phospho-D-ribitylamino)uracil + H2O = 5-amino-6-(D-ribitylamino)uracil + phosphate. Its pathway is cofactor biosynthesis; riboflavin biosynthesis; 5-amino-6-(D-ribitylamino)uracil from GTP: step 4/4. Functionally, catalyzes the dephosphorylation of the riboflavin precursor 5-amino-6-(5-phospho-D-ribitylamino)uracil and of flavin mononucleotide (FMN) in vitro. Also catalyzes the dephosphorylation of phosphorylated 5-6 carbon sugars and monophosphate nucleotides (NMP) in vitro. This chain is 5-amino-6-(5-phospho-D-ribitylamino)uracil phosphatase YwtE (ywtE), found in Bacillus subtilis (strain 168).